Here is a 204-residue protein sequence, read N- to C-terminus: Glycerol-3-phosphate acyltransferase (204 aa).

A run of 5 helical transmembrane segments spans residues tyrosine 6–alanine 26, leucine 80–histidine 100, leucine 122–isoleucine 142, lysine 144–valine 164, and alanine 168–isoleucine 188.

Belongs to the PlsY family. Probably interacts with PlsX.

Its subcellular location is the cell membrane. The catalysed reaction is an acyl phosphate + sn-glycerol 3-phosphate = a 1-acyl-sn-glycero-3-phosphate + phosphate. It functions in the pathway lipid metabolism; phospholipid metabolism. Catalyzes the transfer of an acyl group from acyl-phosphate (acyl-PO(4)) to glycerol-3-phosphate (G3P) to form lysophosphatidic acid (LPA). This enzyme utilizes acyl-phosphate as fatty acyl donor, but not acyl-CoA or acyl-ACP. In Clostridioides difficile (strain 630) (Peptoclostridium difficile), this protein is Glycerol-3-phosphate acyltransferase.